The primary structure comprises 218 residues: uncharacterized protein (218 aa).

The signal sequence occupies residues 1–21; it reads MKKFVYKYSFGALLLLSGLSS. The N-palmitoyl cysteine moiety is linked to residue Cys-22. Cys-22 carries S-diacylglycerol cysteine lipidation.

The protein belongs to the chlamydial CPn_0875/CT_734/TC_0107 family.

Its subcellular location is the cell membrane. This is an uncharacterized protein from Chlamydia muridarum (strain MoPn / Nigg).